Here is a 192-residue protein sequence, read N- to C-terminus: MLPLLLASSSTYRRELLSRLRLPFVCSSPDIDESHRPDESAIELVKRLAEQKARALADSHPAHLIIGSDQVAVLGERIIGKPHTFENAREQLMAASGASVTFLTGLALLNSQTGHCQVDCVPFTVHMRVLDQARVERYLRAEQPYDCAGSFKAEGLGVSLFQSTEGPDATSLIGLPLIRLIDMLLAEGVQIP.

Catalysis depends on aspartate 69, which acts as the Proton acceptor.

This sequence belongs to the Maf family. YceF subfamily. The cofactor is a divalent metal cation.

The protein localises to the cytoplasm. The enzyme catalyses N(7)-methyl-GTP + H2O = N(7)-methyl-GMP + diphosphate + H(+). Its function is as follows. Nucleoside triphosphate pyrophosphatase that hydrolyzes 7-methyl-GTP (m(7)GTP). May have a dual role in cell division arrest and in preventing the incorporation of modified nucleotides into cellular nucleic acids. In Pseudomonas fluorescens (strain Pf0-1), this protein is 7-methyl-GTP pyrophosphatase.